Reading from the N-terminus, the 174-residue chain is MTTIVSVRRDGHVVIGGDGQVTLGNTVMKGNAKKVRRLYNNKVIAGFAGGTADAFTLFELFERKLEMHQGHLTKAAVELAKDWRTDRMLRKLEALLAVADETASLIITGNGDVVQPEDDLIAIGSGGPYAQSAARALLENTELGARDIVEKSLSIAGDICIYTNRFQTIEELTY.

Thr2 is an active-site residue. Residues Gly157, Cys160, and Thr163 each coordinate Na(+).

Belongs to the peptidase T1B family. HslV subfamily. In terms of assembly, a double ring-shaped homohexamer of HslV is capped on each side by a ring-shaped HslU homohexamer. The assembly of the HslU/HslV complex is dependent on binding of ATP.

It localises to the cytoplasm. It catalyses the reaction ATP-dependent cleavage of peptide bonds with broad specificity.. With respect to regulation, allosterically activated by HslU binding. Functionally, protease subunit of a proteasome-like degradation complex believed to be a general protein degrading machinery. The chain is ATP-dependent protease subunit HslV from Yersinia pseudotuberculosis serotype I (strain IP32953).